A 285-amino-acid chain; its full sequence is Phosphatidylserine decarboxylase proenzyme (285 aa).

Active-site charge relay system; for autoendoproteolytic cleavage activity residues include D96, H152, and S250. S250 acts as the Schiff-base intermediate with substrate; via pyruvic acid; for decarboxylase activity in catalysis. A Pyruvic acid (Ser); by autocatalysis modification is found at S250.

The protein belongs to the phosphatidylserine decarboxylase family. PSD-B subfamily. Prokaryotic type I sub-subfamily. In terms of assembly, heterodimer of a large membrane-associated beta subunit and a small pyruvoyl-containing alpha subunit. Requires pyruvate as cofactor. Is synthesized initially as an inactive proenzyme. Formation of the active enzyme involves a self-maturation process in which the active site pyruvoyl group is generated from an internal serine residue via an autocatalytic post-translational modification. Two non-identical subunits are generated from the proenzyme in this reaction, and the pyruvate is formed at the N-terminus of the alpha chain, which is derived from the carboxyl end of the proenzyme. The autoendoproteolytic cleavage occurs by a canonical serine protease mechanism, in which the side chain hydroxyl group of the serine supplies its oxygen atom to form the C-terminus of the beta chain, while the remainder of the serine residue undergoes an oxidative deamination to produce ammonia and the pyruvoyl prosthetic group on the alpha chain. During this reaction, the Ser that is part of the protease active site of the proenzyme becomes the pyruvoyl prosthetic group, which constitutes an essential element of the active site of the mature decarboxylase.

It localises to the cell membrane. It catalyses the reaction a 1,2-diacyl-sn-glycero-3-phospho-L-serine + H(+) = a 1,2-diacyl-sn-glycero-3-phosphoethanolamine + CO2. It functions in the pathway phospholipid metabolism; phosphatidylethanolamine biosynthesis; phosphatidylethanolamine from CDP-diacylglycerol: step 2/2. Catalyzes the formation of phosphatidylethanolamine (PtdEtn) from phosphatidylserine (PtdSer). This Acinetobacter baylyi (strain ATCC 33305 / BD413 / ADP1) protein is Phosphatidylserine decarboxylase proenzyme.